The following is an 88-amino-acid chain: Small ribosomal subunit protein bS16c (88 aa).

This sequence belongs to the bacterial ribosomal protein bS16 family.

The protein resides in the plastid. Its subcellular location is the chloroplast. This is Small ribosomal subunit protein bS16c from Oenothera elata subsp. hookeri (Hooker's evening primrose).